The sequence spans 380 residues: Opsin-2 (380 aa).

At 1–51 the chain is on the extracellular side; it reads MVNTTDFYPVPAAMAYESSVGLPLLGWNVPTEHLDLVHPHWRSFQVPNKYW. Residue N3 is glycosylated (N-linked (GlcNAc...) asparagine). Residues 52 to 76 form a helical membrane-spanning segment; sequence HFGLAFVYFMLMCMSSLGNGIVLWI. The Cytoplasmic portion of the chain corresponds to 77–88; the sequence is YATTKSIRTPSN. A helical transmembrane segment spans residues 89-115; that stretch reads MFIVNLALFDVLMLLEMPMLVVSSLFY. The Extracellular segment spans residues 116–128; the sequence is QRPVGWELGCDIY. C125 and C202 are joined by a disulfide. Residues 129 to 148 form a helical membrane-spanning segment; it reads AALGSVAGIGSAINNAAIAF. Residues 149–166 are Cytoplasmic-facing; that stretch reads DRYRTISCPIDGRLTQGQ. The chain crosses the membrane as a helical span at residues 167–191; it reads VLALIAGTWVWTLPFTLMPLLRIWS. At 192 to 215 the chain is on the extracellular side; sequence RFTAEGFLTTCSFDYLTDDEDTKV. The chain crosses the membrane as a helical span at residues 216–243; it reads FVGCIFAWSYAFPLCLICCFYYRLIGAV. The Cytoplasmic segment spans residues 244–279; sequence REHEKMLRDQAKKMNVKSLQSNADTEAQSAEIRIAK. Residues 280 to 303 form a helical membrane-spanning segment; it reads VALTIFFLFLCSWTPYAVVAMIGA. The Extracellular segment spans residues 304-311; that stretch reads FGNRAALT. The chain crosses the membrane as a helical span at residues 312 to 336; it reads PLSTMIPAVTAKIVSCIDPWVYAIN. K323 is subject to N6-(retinylidene)lysine. Residues 337 to 380 are Cytoplasmic-facing; the sequence is HPRFRAEVQKRMKWLHLGEDARSSKSDTSSTATDRTVGNVSASA. The tract at residues 358–380 is disordered; that stretch reads RSSKSDTSSTATDRTVGNVSASA. Residues 362-372 show a composition bias toward low complexity; it reads SDTSSTATDRT.

This sequence belongs to the G-protein coupled receptor 1 family. Opsin subfamily. In terms of processing, phosphorylated on some or all of the serine and threonine residues present in the C-terminal region.

Its subcellular location is the membrane. Visual pigments are the light-absorbing molecules that mediate vision. They consist of an apoprotein, opsin, covalently linked to cis-retinal. This Schistocerca gregaria (Desert locust) protein is Opsin-2 (Lo2).